Here is a 575-residue protein sequence, read N- to C-terminus: Triokinase/FMN cyclase (575 aa).

The region spanning 9-336 (SVAGCADDAL…IDAETTAAAW (328 aa)) is the DhaK domain. Dihydroxyacetone is bound by residues 56-59 (GSGH), K109, and D114. The active-site Tele-hemiaminal-histidine intermediate is the H221. The segment at 348–367 (KRSRVAPAEPQEAPDSTAAG) is disordered. A Phosphoserine modification is found at S350. The DhaL domain occupies 372–571 (KRMALVLERV…AAAILRAILE (200 aa)). Residues 401–404 (DGDC), 446–447 (SS), G486, and 494–495 (TM) contribute to the ATP site. 2 positions are modified to phosphoserine: S511 and S545. 556-558 (DPG) lines the ATP pocket.

It belongs to the dihydroxyacetone kinase (DAK) family. As to quaternary structure, homodimer. Interacts with IFIH1 (via the CARD domains), the interaction is inhibited by viral infection. Mg(2+) serves as cofactor. The cofactor is Mn(2+). It depends on Co(2+) as a cofactor. As to expression, detected in erythrocytes (at protein level).

The enzyme catalyses dihydroxyacetone + ATP = dihydroxyacetone phosphate + ADP + H(+). It carries out the reaction D-glyceraldehyde + ATP = D-glyceraldehyde 3-phosphate + ADP + H(+). It catalyses the reaction FAD = riboflavin cyclic-4',5'-phosphate + AMP + H(+). Its activity is regulated as follows. Each activity is inhibited by the substrate(s) of the other. Functionally, catalyzes both the phosphorylation of dihydroxyacetone and of glyceraldehyde, and the splitting of ribonucleoside diphosphate-X compounds among which FAD is the best substrate. Represses IFIH1-mediated cellular antiviral response. This is Triokinase/FMN cyclase from Homo sapiens (Human).